The primary structure comprises 453 residues: Ankyrin repeat and SOCS box protein 16 (453 aa).

ANK repeat units follow at residues 56-85, 110-139, 142-171, 175-204, 209-238, 242-279, and 283-312; these read CRDPAVHQALFSGNLQQVQALFQDEEAANM, KQTAPLAIATARGYTDCARHLIRQGAELDA, GGRAALHEACARAQFDCVRLLLTFGAKANV, EGTTPLHLCTIPESLQCAKLLLEAGATVNL, SQETPLHVAAARGLEQHVALYLEHGADVGL, QGETALNTACAGAEGPGSCRRHQAAARRLLEAGADARA, and KRHTPLHNACANGCGGLAELLLRYGARAEV. The 53-residue stretch at 398 to 450 folds into the SOCS box domain; sequence YSSALCMVNQPRQLQHLARLAVRARLGSRCRQGATRLPLPPLLRDYLLLRVEG.

Belongs to the ankyrin SOCS box (ASB) family.

Its pathway is protein modification; protein ubiquitination. May be a substrate-recognition component of a SCF-like ECS (Elongin-Cullin-SOCS-box protein) E3 ubiquitin-protein ligase complex which mediates the ubiquitination and subsequent proteasomal degradation of target proteins. The protein is Ankyrin repeat and SOCS box protein 16 (ASB16) of Homo sapiens (Human).